The primary structure comprises 430 residues: Synaptotagmin-11 (430 aa).

Over 1 to 15 the chain is Vesicular; the sequence is MAEITNIRPSFDVSP. Residues 16-36 traverse the membrane as a helical segment; that stretch reads VAAGLIGASVLVVCVSVTVFV. The Cytoplasmic segment spans residues 37–430; it reads WTCCHQQAEK…VAKWHSLSEY (394 aa). The disordered stretch occupies residues 132-154; sequence RSPMTSLTPGESKPTSPSSPEED. Position 133 is a phosphoserine (S133). Low complexity predominate over residues 140–150; the sequence is PGESKPTSPSS. 2 consecutive C2 domains span residues 156-278 and 290-425; these read MLGS…QLTR and SRGE…AKWH. Residues D249, S252, and D255 each coordinate Ca(2+).

It belongs to the synaptotagmin family. Homodimer. Can also form heterodimers. Interacts with PRKN. Interacts (via C2 2 domain) with AGO2 and SND1; the interaction with SND1 is direct. Interacts with KIF1A; the interaction increases in presence of calcium. Ca(2+) serves as cofactor. Ubiquitinated, at least by PRKN, and targeted to the proteasome complex for degradation. Ubiquitination is inhibited by ATP13A2. Highly expressed in brain and at lower levels in other tissues.

It localises to the cytoplasmic vesicle membrane. The protein localises to the perikaryon. Its subcellular location is the golgi apparatus. It is found in the trans-Golgi network membrane. The protein resides in the recycling endosome membrane. It localises to the lysosome membrane. The protein localises to the cytoplasmic vesicle. Its subcellular location is the phagosome. It is found in the cell projection. The protein resides in the axon. It localises to the dendrite. The protein localises to the postsynaptic density. Its subcellular location is the clathrin-coated vesicle membrane. Synaptotagmin family member involved in vesicular and membrane trafficking which does not bind Ca(2+). Inhibits clathrin-mediated and bulk endocytosis in neurons, functions to ensure precision in vesicle retrieval. Plays an important role in dopamine transmission by regulating endocytosis and the vesicle-recycling process. Essential component of a neuronal vesicular trafficking pathway that differs from the synaptic vesicle trafficking pathway but is crucial for development and synaptic plasticity. In macrophages and microglia, inhibits the conventional cytokine secretion, of at least IL6 and TNF, and phagocytosis. In astrocytes, regulates lysosome exocytosis, mechanism required for the repair of injured astrocyte cell membrane. Required for the ATP13A2-mediated regulation of the autophagy-lysosome pathway. This chain is Synaptotagmin-11, found in Rattus norvegicus (Rat).